A 342-amino-acid chain; its full sequence is S-adenosylmethionine:tRNA ribosyltransferase-isomerase (342 aa).

It belongs to the QueA family. Monomer.

The protein localises to the cytoplasm. It carries out the reaction 7-aminomethyl-7-carbaguanosine(34) in tRNA + S-adenosyl-L-methionine = epoxyqueuosine(34) in tRNA + adenine + L-methionine + 2 H(+). It participates in tRNA modification; tRNA-queuosine biosynthesis. Functionally, transfers and isomerizes the ribose moiety from AdoMet to the 7-aminomethyl group of 7-deazaguanine (preQ1-tRNA) to give epoxyqueuosine (oQ-tRNA). The protein is S-adenosylmethionine:tRNA ribosyltransferase-isomerase of Streptococcus pyogenes serotype M1.